The chain runs to 1214 residues: Filamin-A-interacting protein 1 (1214 aa).

Residues 1 to 15 show a composition bias toward polar residues; that stretch reads MRSRNQGGESSSNGH. The tract at residues 1 to 73 is disordered; it reads MRSRNQGGES…ESEKKTKKPL (73 aa). 2 stretches are compositionally biased toward basic and acidic residues: residues 32 to 47 and 61 to 73; these read PSEDAKKNKANRKGED and PSGESEKKTKKPL. Ser-138 carries the post-translational modification Phosphoserine. 2 coiled-coil regions span residues 192 to 581 and 624 to 778; these read DYMN…KLRS and PEDN…ELEL. Disordered regions lie at residues 875-898 and 949-976; these read KRENGPSAPQEKGPRPNQGTGHPG and KPRITIIPSPNVMSQKPKSADPTLGPER. A Phosphoserine modification is found at Ser-979. The tract at residues 1104 to 1192 is disordered; sequence VSTGTVLRSP…TKFQPRAETQ (89 aa). Positions 1126-1140 are enriched in low complexity; it reads VTSTITITPVTTSST. Polar residues predominate over residues 1141–1157; it reads RGTQSVSGQDGSSQRPT. Residues 1169–1180 show a composition bias toward low complexity; sequence AGKPVVAAPGAG.

It belongs to the FILIP1 family. As to quaternary structure, interacts with FLNA. Interacts with RHOD (in GTP-bound form).

Its subcellular location is the cytoplasm. The protein resides in the cytoskeleton. By acting through a filamin-A/F-actin axis, it controls the start of neocortical cell migration from the ventricular zone. May be able to induce the degradation of filamin-A. In Mus musculus (Mouse), this protein is Filamin-A-interacting protein 1 (Filip1).